The primary structure comprises 404 residues: Cysteine desulfurase IscS (404 aa).

Pyridoxal 5'-phosphate contacts are provided by residues 75–76 (AT), Asn155, Gln183, and 203–205 (SAH). Lys206 is modified (N6-(pyridoxal phosphate)lysine). Pyridoxal 5'-phosphate is bound at residue Thr243. The active-site Cysteine persulfide intermediate is Cys328. Residue Cys328 participates in [2Fe-2S] cluster binding.

It belongs to the class-V pyridoxal-phosphate-dependent aminotransferase family. NifS/IscS subfamily. As to quaternary structure, homodimer. Forms a heterotetramer with IscU, interacts with other sulfur acceptors. The cofactor is pyridoxal 5'-phosphate.

It is found in the cytoplasm. The enzyme catalyses (sulfur carrier)-H + L-cysteine = (sulfur carrier)-SH + L-alanine. Its pathway is cofactor biosynthesis; iron-sulfur cluster biosynthesis. In terms of biological role, master enzyme that delivers sulfur to a number of partners involved in Fe-S cluster assembly, tRNA modification or cofactor biosynthesis. Catalyzes the removal of elemental sulfur atoms from cysteine to produce alanine. Functions as a sulfur delivery protein for Fe-S cluster synthesis onto IscU, an Fe-S scaffold assembly protein, as well as other S acceptor proteins. This chain is Cysteine desulfurase IscS, found in Aeromonas hydrophila subsp. hydrophila (strain ATCC 7966 / DSM 30187 / BCRC 13018 / CCUG 14551 / JCM 1027 / KCTC 2358 / NCIMB 9240 / NCTC 8049).